The primary structure comprises 197 residues: Adenylylsulfatase HINT3 (197 aa).

The tract at residues 14–43 (NPPGPNPTRDPTLRVSDCSSGSSGDGKVES) is disordered. In terms of domain architecture, HIT spans 51 to 158 (VFCKIIRGES…IPRKERDCLW (108 aa)). Residues 143–147 (HTHIH) carry the Histidine triad motif motif. The active-site Tele-AMP-histidine intermediate is the H145. H147 contacts substrate.

It localises to the peroxisome. It catalyses the reaction adenosine 5'-phosphosulfate + H2O = sulfate + AMP + 2 H(+). Functionally, possesses adenylylsulfatase activity in vitro. This Arabidopsis thaliana (Mouse-ear cress) protein is Adenylylsulfatase HINT3.